Reading from the N-terminus, the 6199-residue chain is Adhesion G-protein coupled receptor V1 (6199 aa).

The signal sequence occupies residues 1-23 (MPAVLALSGLLLMLLTVSVRSES). Calx-beta domains follow at residues 24-109 (AELR…VFIL), 126-230 (ATIT…VQLT), 249-355 (ISRN…QVVL), 380-480 (DKPY…LKLI), 637-737 (PDIA…ILTL), 753-853 (SREI…VVLS), 869-972 (NITV…ITLL), 997-1083 (IYFA…YIVL), 1099-1199 (TVVI…LRLM), 1434-1534 (PIPG…FYLQ), 1563-1655 (GLFS…RVRL), 1835-1937 (IIVT…VRLT), 1963-2063 (LFVF…FLEL), 2092-2190 (QVII…RIEL), 2208-2308 (ITIL…KVEL), 2425-2525 (AAFC…FIIK), 2582-2659 (VREE…QIGL), 2673-2773 (DTVT…RVIL), 2814-2908 (PSSL…LVNI), 2931-3029 (EIII…QLIL), and 3054-3154 (GHGI…TVTL). Residues 24-5803 (AELRFQGQTQ…IESLASFNEA (5780 aa)) lie on the Extracellular side of the membrane. 6 EAR repeats span residues 3239-3284 (VLAV…KWQG), 3285-3333 (VFVP…RVQA), 3336-3372 (NLTL…VWNR), 3374-3420 (SFFL…QWTD), 3422-3467 (RFQN…LWGS), and 3471-3513 (VFQQ…SWRS). 13 consecutive Calx-beta domains span residues 3562–3605 (SNQS…RVSL), 3619–3719 (QVTF…TIVL), 3778–3854 (ITLS…FVNI), 3916–3985 (VLRL…MVKL), 4000–4103 (VVVS…IQLL), 4120–4220 (VVIR…QLRL), 4247–4335 (HGLF…FLNI), 4371–4471 (VIIQ…LQLT), 4493–4593 (DSPN…IIML), 4615–4715 (KFGD…TLRL), 4993–5076 (QHLV…VNLT), 5125–5225 (SEDS…IYLS), and 5260–5360 (VGFS…LVEV). The GAIN-B domain maps to 5636–5801 (PYFTIAAHHW…AEIESLASFN (166 aa)). 2 cysteine pairs are disulfide-bonded: C5751/C5780 and C5768/C5782. The tract at residues 5751–5801 (CLLWNQAAESWLSDGQFCRLVDDTQNYVECACSHLSIYTAYAEIESLASFN) is GPS. Residues 5804 to 5824 (FYAAGFICISGFALAMVSHLM) form a helical membrane-spanning segment. The Cytoplasmic segment spans residues 5825 to 5834 (CARFLMFAAK). Residues 5835–5855 (LLTHMMVACLGTQICFLVSAF) form a helical membrane-spanning segment. The Extracellular segment spans residues 5856–5864 (RGRMFSEDS). The chain crosses the membrane as a helical span at residues 5865–5885 (CAALGLFFHYFHLSQFGWMLV). Topologically, residues 5886 to 5908 (QAINFWQILVMNDEHTERRYLLY) are cytoplasmic. A helical membrane pass occupies residues 5909–5929 (FLLSWGLPALVIIVLVVVLLG). Topologically, residues 5930-5954 (GFGWSIHSVYGLVQGDLCFIPNVYA) are extracellular. The chain crosses the membrane as a helical span at residues 5955–5975 (ALCTAALVPLICLVGVLVIFI). The Cytoplasmic segment spans residues 5976-6001 (HAYQVTQQWKAYDDIYRGRTNSSEVP). A helical transmembrane segment spans residues 6002–6022 (MMLYLFALVTLVCVWAGLHMA). Residues 6023–6025 (YRY) are Extracellular-facing. The helical transmembrane segment at 6026 to 6046 (IWMLILLVIFNIFLGLYVFSV) threads the bilayer. The Cytoplasmic portion of the chain corresponds to 6047–6199 (YFVMHNQLFW…RRIPIADTHL (153 aa)).

It belongs to the G-protein coupled receptor 2 family. Adhesion G-protein coupled receptor (ADGR) subfamily. Heterodimer of 2 chains generated by proteolytic processing; the large extracellular N-terminal fragment and the membrane-bound C-terminal fragment predominantly remain associated and non-covalently linked. Post-translationally, autoproteolytically processed at the GPS region of the GAIN-B domain; this cleavage modulates receptor activity.

The protein resides in the cell membrane. Its subcellular location is the cell projection. It localises to the stereocilium membrane. The protein localises to the photoreceptor inner segment. Receptor that may have an important role in the development of the sensory nervous system. The sequence is that of Adhesion G-protein coupled receptor V1 (adgrv1) from Danio rerio (Zebrafish).